Here is an 86-residue protein sequence, read N- to C-terminus: UPF0335 protein BruAb1_1737 (86 aa).

This sequence belongs to the UPF0335 family.

This Brucella abortus biovar 1 (strain 9-941) protein is UPF0335 protein BruAb1_1737.